We begin with the raw amino-acid sequence, 588 residues long: Pleckstrin homology domain-containing family A member 4 (588 aa).

The PH domain maps to 54–153 (PVHIRGWLHK…WLRALGRASR (100 aa)). Disordered regions lie at residues 155–349 (EGED…QASM) and 495–588 (AGLG…VDHL). A Phosphoserine modification is found at serine 164. Over residues 183-193 (VNRREEGRISE) the composition is skewed to basic and acidic residues. Residues 211–222 (TPNSTVDLQTDT) are compositionally biased toward polar residues. Composition is skewed to low complexity over residues 246 to 260 (PRPR…PLSA) and 321 to 334 (QRTQ…GSST). Serine 562 carries the post-translational modification Phosphoserine.

The protein localises to the cytoplasm. It is found in the membrane. In terms of biological role, binds specifically to phosphatidylinositol 3-phosphate (PtdIns3P), but not to other phosphoinositides. The polypeptide is Pleckstrin homology domain-containing family A member 4 (Plekha4) (Mus musculus (Mouse)).